A 432-amino-acid chain; its full sequence is Cyclic GMP-AMP synthase (432 aa).

110–115 (QGSFQY) lines the GTP pocket. Residues Asp-129 and Asp-131 each coordinate Mg(2+). Arg-180 is an ATP binding site. A Mg(2+)-binding site is contributed by Asp-191. ATP is bound at residue Ser-255. GTP-binding residues include Lys-283, Ser-297, and Asp-344. Gly-432 participates in a covalent cross-link: Glycyl cysteine dithioester (Gly-Cys) (interchain with C-13 in Cap2). Gly-432 is covalently cross-linked (Glycyl cysteine dithioester (Gly-Cys) (interchain with C-493 in Cap2)). Residue Gly-432 forms a Glycyl cysteine dithioester (Gly-Cys) (interchain with C-513 in Cap2) linkage. A Glycyl lysine isopeptide (Gly-Lys) (interchain with K-? in acceptor proteins) cross-link involves residue Gly-432.

Belongs to the CD-NTase family. A02 subfamily. As to quaternary structure, a Cap2 dimer is bound on either side by a DncV monomer. The cofactor is Mg(2+). In terms of processing, in bacteria expressing capV-dncV-cap2-cap3, this protein is conjugated to about 130 cellular proteins by Cap2, most of which are involved in metabolism; more conjugated protein is found in the absence of Cap3. Most conjugation occurs via an isopeptide bond with the epsilon-amine of Lys on the target protein, but Cys-conjugation also occurs, including to Cap2. Conjugation or deconjugation from cellular proteins does not change the DncV activity in vitro, but does so in vivo during infection. Post-translationally, (Microbial infection) During phage T4 infection is conjugated to at least 2 T4 proteins (fibritin (wac) and dexA.2).

The catalysed reaction is GTP + ATP = 3',3'-cGAMP + 2 diphosphate. With respect to regulation, primed for activation by Cap2 which conjugates it to cellular proteins. cGAMP production is induced in phage T4 infected cells in a manner that requires Cap2 and Cap3, as well as a C-terminal Ala or Gly residue in this protein. Its function is as follows. Cyclic nucleotide synthase (second messenger synthase) of a CBASS antivirus system. CBASS (cyclic oligonucleotide-based antiphage signaling system) provides immunity against bacteriophages. The CD-NTase protein (DncV, this protein) synthesizes cyclic nucleotides in response to infection; these serve as specific second messenger signals. The signals activate a diverse range of effectors, leading to bacterial cell death and thus abortive phage infection. A type II-A(GA) CBASS system. Catalyzes the synthesis of 3',3'-cyclic GMP-AMP (cGAMP) from GTP and ATP, a second messenger in cell signal transduction. Its product controls the activity of cGAMP-activated phospholipase CapV, a patatin-like lipase that is a direct cGAMP receptor encoded in the dncV operon. In terms of biological role, protects E.coli against phage infection. When capV and dncV are introduced in E.coli MG1655 there is 1000-fold protection against phage P1; protection against other phage (T2, T4, T5, T6 and lambda-vir) requires the 2 subsequent genes (cap2 and cap3). In another paper the capV-dncV-cap2-cap3 operon gives 10(4)-10(5)-fold protection against phages lambda, T2, T4 and T6, about 1000-fold protection against P1 and 10-fold protection against T5. This is Cyclic GMP-AMP synthase from Escherichia coli (strain TW11681).